A 303-amino-acid polypeptide reads, in one-letter code: 4-diphosphocytidyl-2-C-methyl-D-erythritol kinase (303 aa).

The active site involves Lys-18. 111–121 (PVASGIGGGSA) serves as a coordination point for ATP. Asp-153 is an active-site residue.

Belongs to the GHMP kinase family. IspE subfamily.

The catalysed reaction is 4-CDP-2-C-methyl-D-erythritol + ATP = 4-CDP-2-C-methyl-D-erythritol 2-phosphate + ADP + H(+). The protein operates within isoprenoid biosynthesis; isopentenyl diphosphate biosynthesis via DXP pathway; isopentenyl diphosphate from 1-deoxy-D-xylulose 5-phosphate: step 3/6. In terms of biological role, catalyzes the phosphorylation of the position 2 hydroxy group of 4-diphosphocytidyl-2C-methyl-D-erythritol. This chain is 4-diphosphocytidyl-2-C-methyl-D-erythritol kinase, found in Sinorhizobium medicae (strain WSM419) (Ensifer medicae).